Reading from the N-terminus, the 291-residue chain is MITTEKHAEVRELLDAERAAGRRVAMVGTSGGTHAGHISLVEQAKKECDVVAVFWNGALKLEWASGGVQAYNRDLAHDQALFEAAGVDIFYIPMRDDLYQRPSNTFMAMPGMLRHLTGMPEGEHMELLVTMVATLLNIAGPCLTFFGEKDWQQLVMFQRMAEDLHLPSRVIGCPTRREPDGVAISSRNTKLSPEQRAAAPALYAALTAAADAIAAGERDARAAAEVALARLRPVADPDYIVAVEAATLRPLDTLDPAAEGGPSDGEVRLLASVRFGTTPLVDNIGVTVPTA.

Histidine 37 serves as the catalytic Proton donor. An ATP-binding site is contributed by 147 to 150; that stretch reads GEKD. Residue glutamine 153 participates in (R)-pantoate binding. Residue 184–187 participates in ATP binding; that stretch reads ISSR.

It belongs to the pantothenate synthetase family. In terms of assembly, homodimer.

It localises to the cytoplasm. It catalyses the reaction (R)-pantoate + beta-alanine + ATP = (R)-pantothenate + AMP + diphosphate + H(+). It functions in the pathway cofactor biosynthesis; (R)-pantothenate biosynthesis; (R)-pantothenate from (R)-pantoate and beta-alanine: step 1/1. In terms of biological role, catalyzes the condensation of pantoate with beta-alanine in an ATP-dependent reaction via a pantoyl-adenylate intermediate. This Frankia alni (strain DSM 45986 / CECT 9034 / ACN14a) protein is Pantothenate synthetase 1.